The sequence spans 466 residues: Histidine--tRNA ligase (466 aa).

This sequence belongs to the class-II aminoacyl-tRNA synthetase family. Homodimer.

The protein resides in the cytoplasm. It carries out the reaction tRNA(His) + L-histidine + ATP = L-histidyl-tRNA(His) + AMP + diphosphate + H(+). This is Histidine--tRNA ligase from Bifidobacterium longum subsp. infantis (strain ATCC 15697 / DSM 20088 / JCM 1222 / NCTC 11817 / S12).